A 219-amino-acid chain; its full sequence is Beta-crystallin B2 (219 aa).

Ala2 carries the post-translational modification N-acetylalanine. The tract at residues Ala2–Ser16 is N-terminal arm. Beta/gamma crystallin 'Greek key' domains lie at Pro17–Ser56 and Gly57–Lys101. The connecting peptide stretch occupies residues Val102 to Glu120. 2 consecutive Beta/gamma crystallin 'Greek key' domains span residues His121–Ser162 and Gly163–Arg205. The segment at Met207 to Asn219 is C-terminal arm.

The protein belongs to the beta/gamma-crystallin family. In terms of assembly, homo/heterodimer, or complexes of higher-order. The structure of beta-crystallin oligomers seems to be stabilized through interactions between the N-terminal arms.

Functionally, crystallins are the dominant structural components of the vertebrate eye lens. In Gallus gallus (Chicken), this protein is Beta-crystallin B2 (CRYBB2).